Here is a 381-residue protein sequence, read N- to C-terminus: CCN family member 1 (381 aa).

An N-terminal signal peptide occupies residues M1 to S24. The 70-residue stretch at T25–Q94 folds into the IGFBP N-terminal domain. 6 cysteine pairs are disulfide-bonded: C26/C50, C30/C52, C32/C53, C39/C56, C64/C78, and C70/C91. The region spanning R98 to D164 is the VWFC domain. Phosphoserine; by FAM20C is present on S188. Positions K228 to G273 constitute a TSP type-1 domain. A heparin-binding region spans residues S279–G315. 5 disulfides stabilise this stretch: C286-C323, C303-C337, C314-C353, C317-C355, and C322-C359. The CTCK domain maps to C286–P360.

Belongs to the CCN family. In terms of assembly, interaction with integrins is heparin- and cell-type-dependent and promotes cell adhesion. In skin fibroblasts it binds ITGA6/ITGB1, in endothelial cells, binds ITGAV/ITGB3 and in platelets, ITGA2B/ITGB3. Binds, in vitro, ITGAV/ITGB5.

Its subcellular location is the secreted. Promotes cell proliferation, chemotaxis, angiogenesis and cell adhesion. Appears to play a role in wound healing by up-regulating, in skin fibroblasts, the expression of a number of genes involved in angiogenesis, inflammation and matrix remodeling including VEGA-A, VEGA-C, MMP1, MMP3, TIMP1, uPA, PAI-1 and integrins alpha-3 and alpha-5. CCN1-mediated gene regulation is dependent on heparin-binding. Down-regulates the expression of alpha-1 and alpha-2 subunits of collagen type-1. Promotes cell adhesion and adhesive signaling through integrin alpha-6/beta-1, cell migration through integrin alpha-v/beta-5 and cell proliferation through integrin alpha-v/beta-3. The polypeptide is CCN family member 1 (Homo sapiens (Human)).